An 809-amino-acid chain; its full sequence is Glycerol-3-phosphate acyltransferase (809 aa).

Residues 306 to 311 carry the HXXXXD motif motif; it reads HRSHMD.

The protein belongs to the GPAT/DAPAT family.

Its subcellular location is the cell inner membrane. It catalyses the reaction sn-glycerol 3-phosphate + an acyl-CoA = a 1-acyl-sn-glycero-3-phosphate + CoA. Its pathway is phospholipid metabolism; CDP-diacylglycerol biosynthesis; CDP-diacylglycerol from sn-glycerol 3-phosphate: step 1/3. The polypeptide is Glycerol-3-phosphate acyltransferase (Vibrio vulnificus (strain YJ016)).